We begin with the raw amino-acid sequence, 371 residues long: Putative glutamate--cysteine ligase 2 (371 aa).

It belongs to the glutamate--cysteine ligase type 2 family. YbdK subfamily.

It catalyses the reaction L-cysteine + L-glutamate + ATP = gamma-L-glutamyl-L-cysteine + ADP + phosphate + H(+). Functionally, ATP-dependent carboxylate-amine ligase which exhibits weak glutamate--cysteine ligase activity. The polypeptide is Putative glutamate--cysteine ligase 2 (Nitrosospira multiformis (strain ATCC 25196 / NCIMB 11849 / C 71)).